The chain runs to 649 residues: Phospholipase A1 PLIP1, chloroplastic (649 aa).

A chloroplast-targeting transit peptide spans 1–67 (MAFNTAMAST…NNRILAVSVR (67 aa)). Residues 420–424 (GHSLG) carry the GXSXG motif. Residue serine 422 is the Acyl-ester intermediate of the active site. Catalysis depends on charge relay system residues aspartate 483 and histidine 593.

The protein belongs to the AB hydrolase superfamily. Lipase family.

It localises to the plastid. The protein localises to the chloroplast thylakoid membrane. The catalysed reaction is a 1,2-diacyl-sn-glycero-3-phosphocholine + H2O = a 2-acyl-sn-glycero-3-phosphocholine + a fatty acid + H(+). It catalyses the reaction a 1,2-diacyl-3-O-(beta-D-galactosyl)-sn-glycerol + 2 H2O = 3-beta-D-galactosyl-sn-glycerol + 2 a fatty acid + 2 H(+). Sn-1-specific phospholipase A1 involved in seed oil biosynthesis. Hydrolyzes polyunsaturated acyl groups from a unique chloroplast-specific phosphatidylglycerol (PG) that contains 16:1 delta 3-trans as its second acyl group. The polyunsaturated acyl groups released by PLIP1 are exported from the chloroplast, reincorporated into phosphatidylcholine (PC), and ultimately enter seed triacylglycerol (TAG). In vitro, possesses broad substrate specificity. Can hydrolyze the galactolipid monogalactosyldiacylglycerol (MGDG), and the phoshpolipids phosphatidylcholine (PC), phosphatidylethanolamine (PE), phosphatidic acid (PA), phosphatidylserine (PS) phosphatidylglycerol (PG) and phosphatidylinositol (PI). The polypeptide is Phospholipase A1 PLIP1, chloroplastic (Arabidopsis thaliana (Mouse-ear cress)).